A 101-amino-acid polypeptide reads, in one-letter code: Small ribosomal subunit protein uS14 (101 aa).

This sequence belongs to the universal ribosomal protein uS14 family. Part of the 30S ribosomal subunit. Contacts proteins S3 and S10.

Binds 16S rRNA, required for the assembly of 30S particles and may also be responsible for determining the conformation of the 16S rRNA at the A site. This is Small ribosomal subunit protein uS14 from Corynebacterium efficiens (strain DSM 44549 / YS-314 / AJ 12310 / JCM 11189 / NBRC 100395).